Consider the following 138-residue polypeptide: Dual specificity phosphatase ibp1 (138 aa).

Residues 19–133 enclose the Rhodanese domain; that stretch reads SPNEISIIDV…WKRRYGGQQG (115 aa). The Phosphocysteine intermediate role is filled by Cys70.

The protein belongs to the MPI phosphatase family.

It is found in the cytoplasm. Its subcellular location is the nucleus. It carries out the reaction O-phospho-L-tyrosyl-[protein] + H2O = L-tyrosyl-[protein] + phosphate. In terms of biological role, may play a role in DNA replication checkpoint via regulation of hsk1 or may act downstream of hsk1 in an S phase regulatory pathway. This chain is Dual specificity phosphatase ibp1 (ibp1), found in Schizosaccharomyces pombe (strain 972 / ATCC 24843) (Fission yeast).